We begin with the raw amino-acid sequence, 99 residues long: Nucleoid-associated protein SZO_16661 (99 aa).

The protein belongs to the YbaB/EbfC family. In terms of assembly, homodimer.

It localises to the cytoplasm. The protein resides in the nucleoid. Its function is as follows. Binds to DNA and alters its conformation. May be involved in regulation of gene expression, nucleoid organization and DNA protection. This chain is Nucleoid-associated protein SZO_16661, found in Streptococcus equi subsp. zooepidemicus (strain H70).